The chain runs to 267 residues: Acyl-[acyl-carrier-protein]--UDP-N-acetylglucosamine O-acyltransferase (267 aa).

The protein belongs to the transferase hexapeptide repeat family. LpxA subfamily. Homotrimer.

Its subcellular location is the cytoplasm. The catalysed reaction is a (3R)-hydroxyacyl-[ACP] + UDP-N-acetyl-alpha-D-glucosamine = a UDP-3-O-[(3R)-3-hydroxyacyl]-N-acetyl-alpha-D-glucosamine + holo-[ACP]. It functions in the pathway glycolipid biosynthesis; lipid IV(A) biosynthesis; lipid IV(A) from (3R)-3-hydroxytetradecanoyl-[acyl-carrier-protein] and UDP-N-acetyl-alpha-D-glucosamine: step 1/6. Its function is as follows. Involved in the biosynthesis of lipid A, a phosphorylated glycolipid that anchors the lipopolysaccharide to the outer membrane of the cell. The sequence is that of Acyl-[acyl-carrier-protein]--UDP-N-acetylglucosamine O-acyltransferase from Cupriavidus metallidurans (strain ATCC 43123 / DSM 2839 / NBRC 102507 / CH34) (Ralstonia metallidurans).